Consider the following 198-residue polypeptide: Regulation of enolase protein 1 (198 aa).

Its subcellular location is the cytoplasm. Its function is as follows. Functions in the galactose metabolic pathway via the GAL83 protein and that it may control the level of ENO1. This is Regulation of enolase protein 1 (REE1) from Saccharomyces cerevisiae (strain ATCC 204508 / S288c) (Baker's yeast).